The chain runs to 440 residues: MKLWGGRFKEEESKLMEDFNSSLSFDKKLYYEDIKGSIAHVKMLVNQNIIKEEEKEKILLGLEEILKEIDEGILKIEGDYEDIHSFVEINLINKIGNVGKKLHTGRSRNDQVALDMKLYAKKSTEEVIKCLKELMDSLIKVGNENNYIMPGYTHLQRAQVVTFRYHLLAYFEMFKRDEKRLKNALEILNESPLGSGALAGSTYSIDREYTAKLLGFRKPVDNFLDGVSDRDYIIELISKFSIIMMHLSRLSEELILWSSSEFRFIQIGDAYSTGSSIMPQKKNPDGAELIRGKTGRVYGDLIGILTVMKSLPLAYNKDMQEDKEPFFDAKDTVISCLKVMEGIISTLKVNKENLMKSVKKGFLNATEAADYLVNKGMAFRDAHKVIGEIVIYCEDKNSAIEDLSLEELKQFSDLFCEDIYGFIDYKSSINKGIKKEMGYF.

Belongs to the lyase 1 family. Argininosuccinate lyase subfamily.

It localises to the cytoplasm. It carries out the reaction 2-(N(omega)-L-arginino)succinate = fumarate + L-arginine. Its pathway is amino-acid biosynthesis; L-arginine biosynthesis; L-arginine from L-ornithine and carbamoyl phosphate: step 3/3. The sequence is that of Argininosuccinate lyase from Clostridium botulinum (strain Langeland / NCTC 10281 / Type F).